Consider the following 341-residue polypeptide: Phenylalanine--tRNA ligase alpha subunit (341 aa).

Glu-254 serves as a coordination point for Mg(2+).

It belongs to the class-II aminoacyl-tRNA synthetase family. Phe-tRNA synthetase alpha subunit type 1 subfamily. Tetramer of two alpha and two beta subunits. Mg(2+) is required as a cofactor.

It is found in the cytoplasm. It catalyses the reaction tRNA(Phe) + L-phenylalanine + ATP = L-phenylalanyl-tRNA(Phe) + AMP + diphosphate + H(+). The sequence is that of Phenylalanine--tRNA ligase alpha subunit from Chlorobaculum tepidum (strain ATCC 49652 / DSM 12025 / NBRC 103806 / TLS) (Chlorobium tepidum).